Reading from the N-terminus, the 421-residue chain is Gamma-glutamyl phosphate reductase (421 aa).

The protein belongs to the gamma-glutamyl phosphate reductase family.

The protein localises to the cytoplasm. The catalysed reaction is L-glutamate 5-semialdehyde + phosphate + NADP(+) = L-glutamyl 5-phosphate + NADPH + H(+). The protein operates within amino-acid biosynthesis; L-proline biosynthesis; L-glutamate 5-semialdehyde from L-glutamate: step 2/2. Functionally, catalyzes the NADPH-dependent reduction of L-glutamate 5-phosphate into L-glutamate 5-semialdehyde and phosphate. The product spontaneously undergoes cyclization to form 1-pyrroline-5-carboxylate. The protein is Gamma-glutamyl phosphate reductase of Pseudomonas aeruginosa (strain LESB58).